A 926-amino-acid chain; its full sequence is BTB/POZ domain-containing protein KCTD19 (926 aa).

The BTB 1 domain maps to Asn18–Thr72. Ser270 bears the Phosphoserine mark. The BTB 2 domain occupies Ile398–Leu485. A disordered region spans residues Gly673–Ala751. Over residues Asp730–Pro742 the composition is skewed to basic and acidic residues.

In terms of assembly, identified in a complex with ZNF541, HDAC1 and HSPA2. Identified in a complex with ZNF541 and HDAC1. Identified in a complex with HDAC1, HDAC2, DNTTIP1 and ZNF541.

The protein localises to the nucleus. Its function is as follows. Transcription regulator which is essential for male fertility and for the completion of meiotic prophase in spermatocytes. Regulates progression of the pachytene stage of meiotic prophase and promotes the transcriptional activation activity ZNF541. Required for the organization of chromosomes during metaphase I. In Homo sapiens (Human), this protein is BTB/POZ domain-containing protein KCTD19 (KCTD19).